Consider the following 258-residue polypeptide: Gamma-secretase subunit Aph-1b (258 aa).

A run of 7 helical transmembrane segments spans residues 3–23 (VAVFFGCTFIAFGPAIALFMF), 32–52 (VIFLIAGAFFWLVSLLLSSLV), 70–90 (GLLIFGVVLSVLLQEAFRYGY), 118–138 (AYVSGLGFGFMSGAFSVVNIL), 161–181 (AFMTLAIILLHMFWGVVFFEA), 187–207 (WWALGAVVASHLVVSCLTFVN), and 214–234 (LIPTYIILSVMAVWAYLCAGG).

This sequence belongs to the APH-1 family. Component of the gamma-secretase complex, a complex composed of a presenilin homodimer (PSEN1 or PSEN2), nicastrin (NCSTN), APH1 and PEN2.

The protein resides in the membrane. Essential subunit of the gamma-secretase complex, an endoprotease complex that catalyzes the intramembrane cleavage of integral proteins such as Notch receptors. It may represent a stabilizing cofactor for the presenilin homodimer that promotes the formation of a stable complex. In Danio rerio (Zebrafish), this protein is Gamma-secretase subunit Aph-1b (aph1b).